We begin with the raw amino-acid sequence, 220 residues long: Glycerol-3-phosphate acyltransferase (220 aa).

The next 6 membrane-spanning stretches (helical) occupy residues 11-31 (INVI…GYAL), 70-90 (LLVL…SKLF), 96-116 (LQWM…FLNF), 127-147 (GSVV…WFFV), 153-173 (ISSL…FFVP), and 193-213 (MVLI…NLLA).

This sequence belongs to the PlsY family. As to quaternary structure, probably interacts with PlsX.

The protein resides in the cell inner membrane. It carries out the reaction an acyl phosphate + sn-glycerol 3-phosphate = a 1-acyl-sn-glycero-3-phosphate + phosphate. It functions in the pathway lipid metabolism; phospholipid metabolism. Catalyzes the transfer of an acyl group from acyl-phosphate (acyl-PO(4)) to glycerol-3-phosphate (G3P) to form lysophosphatidic acid (LPA). This enzyme utilizes acyl-phosphate as fatty acyl donor, but not acyl-CoA or acyl-ACP. The sequence is that of Glycerol-3-phosphate acyltransferase from Helicobacter pylori (strain HPAG1).